Reading from the N-terminus, the 471-residue chain is 3-isopropylmalate dehydratase large subunit (471 aa).

Residues cysteine 351, cysteine 412, and cysteine 415 each coordinate [4Fe-4S] cluster.

The protein belongs to the aconitase/IPM isomerase family. LeuC type 1 subfamily. Heterodimer of LeuC and LeuD. [4Fe-4S] cluster serves as cofactor.

The catalysed reaction is (2R,3S)-3-isopropylmalate = (2S)-2-isopropylmalate. It functions in the pathway amino-acid biosynthesis; L-leucine biosynthesis; L-leucine from 3-methyl-2-oxobutanoate: step 2/4. Its function is as follows. Catalyzes the isomerization between 2-isopropylmalate and 3-isopropylmalate, via the formation of 2-isopropylmaleate. In Hahella chejuensis (strain KCTC 2396), this protein is 3-isopropylmalate dehydratase large subunit.